The primary structure comprises 1221 residues: Adhesion G-protein coupled receptor G6 (1221 aa).

Positions 1–37 (MMFRSDRMWSCHWKWKPSPLLFLFALYIMCVPHSVWG) are cleaved as a signal peptide. Residues 38–862 (CANCRVVLSN…ASQLDARNTK (825 aa)) are Extracellular-facing. The cysteines at positions 41 and 67 are disulfide-linked. Positions 41-149 (CRVVLSNPSG…KGFNASYIRV (109 aa)) constitute a CUB domain. Ca(2+) is bound by residues E89 and D97. C94 and C111 are oxidised to a cystine. N-linked (GlcNAc...) asparagine glycosylation occurs at N121. 3 residues coordinate Ca(2+): D134, S136, and I137. N-linked (GlcNAc...) asparagine glycosylation is found at N143, N206, N258, N314, N324, N353, N438, N445, N452, N485, N488, and N505. In terms of domain architecture, Pentraxin (PTX) spans 154-356 (RNQKVILPQT…ALKAESNLSC (203 aa)). 2 disulfides stabilise this stretch: C186–C254 and C231–C277. The mediates interaction with laminin-2 stretch occupies residues 473 to 837 (EPRLVLWALL…SDASETVCLC (365 aa)). Intrachain disulfides connect C525-C560 and C548-C580. 12 N-linked (GlcNAc...) asparagine glycosylation sites follow: N563, N593, N600, N605, N667, N673, N695, N704, N750, N776, N811, and N818. Residues 670-853 (SHVNITTRNL…GVLMDLPRSA (184 aa)) form the GAIN-B domain. 2 cysteine pairs are disulfide-bonded: C803–C835 and C822–C837. The interval 803 to 853 (CAFWDLNKNKSFGGWNTSGCVAHRDSDASETVCLCNHFTHFGVLMDLPRSA) is GPS. Residues 842-850 (HFGVLMDLP) are stachel. The chain crosses the membrane as a helical span at residues 863–883 (VLTFISYIGCGISAIFSAATL). The Cytoplasmic portion of the chain corresponds to 884 to 903 (LTYVAFEKLRRDYPSKILMN). Residues 904–924 (LSTALLFLNLLFLLDGWITSF) form a helical membrane-spanning segment. Residues 925 to 929 (NVDGL) lie on the Extracellular side of the membrane. A helical transmembrane segment spans residues 930 to 950 (CIAVAVLLHFFLLATFTWMGL). At 951–970 (EAIHMYIALVKVFNTYIRRY) the chain is on the cytoplasmic side. The chain crosses the membrane as a helical span at residues 971–991 (ILKFCIIGWGLPALVVSVVLA). Residues 992-1024 (SRNNNEVYGKESYGKEKGDEFCWIQDPVIFYVT) lie on the Extracellular side of the membrane. Residues 1025–1045 (CAGYFGVMFFLNIAMFIVVMV) traverse the membrane as a helical segment. Residues 1046 to 1069 (QICGRNGKRSNRTLREEVLRNLRS) are Cytoplasmic-facing. A helical membrane pass occupies residues 1070–1090 (VVSLTFLLGMTWGFAFFAWGP). The Extracellular portion of the chain corresponds to 1091–1092 (LN). The chain crosses the membrane as a helical span at residues 1093–1113 (IPFMYLFSIFNSLQGLFIFIF). Residue N1103 participates in 17alpha-hydroxyprogesterone binding. The Cytoplasmic segment spans residues 1114–1221 (HCAMKENVQK…GQVLVKTGPC (108 aa)). The interval 1156-1176 (NLGKSLSSSSIGSNSTYLTSK) is disordered. Phosphoserine is present on residues S1165 and S1168.

Belongs to the G-protein coupled receptor 2 family. Adhesion G-protein coupled receptor (ADGR) subfamily. Heterodimer of 2 chains generated by proteolytic processing; the large extracellular N-terminal fragment and the membrane-bound C-terminal fragment predominantly remain associated and non-covalently linked. Interacts with Laminin-2; this interaction stabilizes the receptor in an inactive state. Laminin-2 polymerization could facilitate ADGRG6-NTF removal, thereby exposing the tethered agonist to drive myelination. Interacts with PRNP. Interacts with ITGB1. Interacts with LRP1. Post-translationally, proteolytically cleaved into 2 conserved sites: one in the GPS region of the GAIN-B domain (S1 site) and the other in the middle of the extracellular domain (S2 site). The proteolytic cleavage at S1 site generates an extracellular subunit and a seven-transmembrane subunit. Furin is involved in the cleavage of the S2 site generating a soluble fragment. Processing at the GPS region occurred independent of and probably prior to the cleavage at the S2 site. Proteolytic cleavage is required for activation of the receptor. Highly glycosylated. As to expression, expressed in placenta and to a lower extent in pancreas and liver. Detected in aortic endothelial cells but not in skin microvascular endothelial cells.

The protein resides in the cell membrane. Its activity is regulated as follows. Forms a heterodimer of 2 chains generated by proteolytic processing that remain associated through non-covalent interactions mediated by the GAIN-B domain. In the inactivated receptor, the Stachel sequence (also named stalk) is embedded in the GAIN-B domain, where it adopts a beta-strand conformation. On activation, the Stachel moves into the 7 transmembrane region and adopts a twisted hook-shaped configuration that forms contacts within the receptor, leading to coupling of a G-alpha protein, which activates signaling. The cleaved GAIN-B and N-terminal domains can then dissociate from the rest of the receptor. In terms of biological role, adhesion G-protein coupled receptor (aGPCR) for steroid hormones, such as progesterone and 17alpha-hydroxyprogesterone (17OHP). Involved in many biological processes, such as myelination, sprouting angiogenesis, placenta, ear and cartilage development. Ligand binding causes a conformation change that triggers signaling via guanine nucleotide-binding proteins (G proteins) and modulates the activity of downstream effectors, such as adenylate cyclase. ADGRG6 is coupled to G(i) G alpha proteins and mediates inhibition of adenylate cyclase. Also able to couple to G(q) G proteins. Involved in myelination of the peripheral nervous system: required for differentiation of promyelinating Schwann cells and for normal myelination of axons. Also acts as a regulator of body length and bone mass. Acts as a regulator of blood-brain barrier formation in the central nervous system vie its association with LRP1 and ITGB1. This chain is Adhesion G-protein coupled receptor G6, found in Homo sapiens (Human).